Reading from the N-terminus, the 427-residue chain is Enolase (427 aa).

(2R)-2-phosphoglycerate is bound at residue Q163. E205 functions as the Proton donor in the catalytic mechanism. Mg(2+) is bound by residues D242, E285, and D312. Residues K337, R366, S367, and K388 each contribute to the (2R)-2-phosphoglycerate site. K337 acts as the Proton acceptor in catalysis.

The protein belongs to the enolase family. Requires Mg(2+) as cofactor.

The protein localises to the cytoplasm. It localises to the secreted. The protein resides in the cell surface. It catalyses the reaction (2R)-2-phosphoglycerate = phosphoenolpyruvate + H2O. Its pathway is carbohydrate degradation; glycolysis; pyruvate from D-glyceraldehyde 3-phosphate: step 4/5. Functionally, catalyzes the reversible conversion of 2-phosphoglycerate (2-PG) into phosphoenolpyruvate (PEP). It is essential for the degradation of carbohydrates via glycolysis. The polypeptide is Enolase (Herminiimonas arsenicoxydans).